The sequence spans 461 residues: Bifunctional protein GlmU (461 aa).

The tract at residues 1–232 is pyrophosphorylase; the sequence is MNLQIIILAA…SFEVQGINNR (232 aa). UDP-N-acetyl-alpha-D-glucosamine contacts are provided by residues 8-11, K22, Q73, and 78-79; these read LAAG and GT. D102 contacts Mg(2+). Residues G142, E157, and N230 each contribute to the UDP-N-acetyl-alpha-D-glucosamine site. N230 serves as a coordination point for Mg(2+). A linker region spans residues 233-253; sequence QQLQQLERIWQQRAANQLMEK. Residues 254–461 are N-acetyltransferase; sequence GATLADANRF…WKRPVKRERD (208 aa). UDP-N-acetyl-alpha-D-glucosamine-binding residues include R336 and K354. The Proton acceptor role is filled by H366. Residues Y369 and N380 each contribute to the UDP-N-acetyl-alpha-D-glucosamine site. Residues A383, 389–390, S408, and A426 each bind acetyl-CoA; that span reads NY.

It in the N-terminal section; belongs to the N-acetylglucosamine-1-phosphate uridyltransferase family. In the C-terminal section; belongs to the transferase hexapeptide repeat family. In terms of assembly, homotrimer. Mg(2+) serves as cofactor.

It localises to the cytoplasm. It carries out the reaction alpha-D-glucosamine 1-phosphate + acetyl-CoA = N-acetyl-alpha-D-glucosamine 1-phosphate + CoA + H(+). The enzyme catalyses N-acetyl-alpha-D-glucosamine 1-phosphate + UTP + H(+) = UDP-N-acetyl-alpha-D-glucosamine + diphosphate. Its pathway is nucleotide-sugar biosynthesis; UDP-N-acetyl-alpha-D-glucosamine biosynthesis; N-acetyl-alpha-D-glucosamine 1-phosphate from alpha-D-glucosamine 6-phosphate (route II): step 2/2. It participates in nucleotide-sugar biosynthesis; UDP-N-acetyl-alpha-D-glucosamine biosynthesis; UDP-N-acetyl-alpha-D-glucosamine from N-acetyl-alpha-D-glucosamine 1-phosphate: step 1/1. The protein operates within bacterial outer membrane biogenesis; LPS lipid A biosynthesis. Catalyzes the last two sequential reactions in the de novo biosynthetic pathway for UDP-N-acetylglucosamine (UDP-GlcNAc). The C-terminal domain catalyzes the transfer of acetyl group from acetyl coenzyme A to glucosamine-1-phosphate (GlcN-1-P) to produce N-acetylglucosamine-1-phosphate (GlcNAc-1-P), which is converted into UDP-GlcNAc by the transfer of uridine 5-monophosphate (from uridine 5-triphosphate), a reaction catalyzed by the N-terminal domain. The protein is Bifunctional protein GlmU of Legionella pneumophila subsp. pneumophila (strain Philadelphia 1 / ATCC 33152 / DSM 7513).